Here is a 284-residue protein sequence, read N- to C-terminus: L-ribulose-5-phosphate 3-epimerase UlaE (284 aa).

The protein belongs to the L-ribulose-5-phosphate 3-epimerase family.

The catalysed reaction is L-ribulose 5-phosphate = L-xylulose 5-phosphate. It functions in the pathway cofactor degradation; L-ascorbate degradation; D-xylulose 5-phosphate from L-ascorbate: step 3/4. Functionally, catalyzes the isomerization of L-xylulose-5-phosphate to L-ribulose-5-phosphate. Is involved in the anaerobic L-ascorbate utilization. In Shigella boydii serotype 18 (strain CDC 3083-94 / BS512), this protein is L-ribulose-5-phosphate 3-epimerase UlaE.